The sequence spans 275 residues: NH(3)-dependent NAD(+) synthetase (275 aa).

Gly50–Ser57 is an ATP binding site. Mg(2+) is bound at residue Asp56. Arg147 serves as a coordination point for deamido-NAD(+). Residue Thr167 coordinates ATP. Glu172 is a binding site for Mg(2+). Deamido-NAD(+) contacts are provided by Lys180 and Asp187. ATP is bound by residues Lys196 and Thr218. His267 to Lys268 contributes to the deamido-NAD(+) binding site.

The protein belongs to the NAD synthetase family. Homodimer.

The enzyme catalyses deamido-NAD(+) + NH4(+) + ATP = AMP + diphosphate + NAD(+) + H(+). It functions in the pathway cofactor biosynthesis; NAD(+) biosynthesis; NAD(+) from deamido-NAD(+) (ammonia route): step 1/1. Catalyzes the ATP-dependent amidation of deamido-NAD to form NAD. Uses ammonia as a nitrogen source. This Stutzerimonas stutzeri (strain A1501) (Pseudomonas stutzeri) protein is NH(3)-dependent NAD(+) synthetase.